A 353-amino-acid chain; its full sequence is Aliphatic aldoxime dehydratase (353 aa).

Residue S219 coordinates an aliphatic aldoxime. H299 lines the heme b pocket. H320 contributes to the an aliphatic aldoxime binding site. H320 is an active-site residue.

Belongs to the heme-containing dehydratase family. As to quaternary structure, homodimer. Heme b is required as a cofactor.

The catalysed reaction is an aliphatic aldoxime = a nitrile + H2O. With respect to regulation, active when the heme iron is in the ferrous state. Activated by FMN, Fe(2+), Sn(2+), Na(2)SO(3), Na(2)S and vitamin K3. Catalyzes the dehydration of aldoximes to their corresponding nitrile. Is active toward various arylalkyl- and alkyl-aldoximes, and to a lesser extent toward aryl-aldoximes. The chain is Aliphatic aldoxime dehydratase from Rhodococcus globerulus.